Consider the following 353-residue polypeptide: Biotin synthase (353 aa).

A compositionally biased stretch (low complexity) spans 1 to 22; it reads MTACSTTPTTSATSAQPAAGSP. A disordered region spans residues 1–30; sequence MTACSTTPTTSATSAQPAAGSPLQWHARPS. Positions 72–299 constitute a Radical SAM core domain; the sequence is GDIELATLLS…TARVRLSAGR (228 aa). Positions 87, 91, and 94 each coordinate [4Fe-4S] cluster. Residues Cys131, Cys162, Cys222, and Arg294 each coordinate [2Fe-2S] cluster.

The protein belongs to the radical SAM superfamily. Biotin synthase family. Homodimer. [4Fe-4S] cluster is required as a cofactor. It depends on [2Fe-2S] cluster as a cofactor.

The enzyme catalyses (4R,5S)-dethiobiotin + (sulfur carrier)-SH + 2 reduced [2Fe-2S]-[ferredoxin] + 2 S-adenosyl-L-methionine = (sulfur carrier)-H + biotin + 2 5'-deoxyadenosine + 2 L-methionine + 2 oxidized [2Fe-2S]-[ferredoxin]. Its pathway is cofactor biosynthesis; biotin biosynthesis; biotin from 7,8-diaminononanoate: step 2/2. In terms of biological role, catalyzes the conversion of dethiobiotin (DTB) to biotin by the insertion of a sulfur atom into dethiobiotin via a radical-based mechanism. This chain is Biotin synthase, found in Delftia acidovorans (strain DSM 14801 / SPH-1).